Reading from the N-terminus, the 96-residue chain is Large ribosomal subunit protein bL28 (96 aa).

The interval 1-23 (MSRVCELSGKAPMTGNTVSHANN) is disordered.

The protein belongs to the bacterial ribosomal protein bL28 family.

In Cereibacter sphaeroides (strain ATCC 17029 / ATH 2.4.9) (Rhodobacter sphaeroides), this protein is Large ribosomal subunit protein bL28.